Here is a 278-residue protein sequence, read N- to C-terminus: Small ribosomal subunit protein uS2 (278 aa).

The disordered stretch occupies residues 233–258 (IDMEAAGEAPANKGKKKSAKARLDKS).

The protein belongs to the universal ribosomal protein uS2 family.

This chain is Small ribosomal subunit protein uS2, found in Bacteroides fragilis (strain ATCC 25285 / DSM 2151 / CCUG 4856 / JCM 11019 / LMG 10263 / NCTC 9343 / Onslow / VPI 2553 / EN-2).